A 75-amino-acid chain; its full sequence is Probable protein BRICK1-A (75 aa).

Residues 41–72 (MSCRSRLATLNEKLTALERRIEYIEARVTKGE) are a coiled coil.

It belongs to the BRK1 family.

It is found in the cytoplasm. Its subcellular location is the cytoskeleton. Its function is as follows. Involved in regulation of actin and microtubule organization. Part of a WAVE complex that activates the Arp2/3 complex. This is Probable protein BRICK1-A (brk1-a) from Xenopus laevis (African clawed frog).